We begin with the raw amino-acid sequence, 1377 residues long: DNA-directed RNA polymerase subunit beta (1377 aa).

It belongs to the RNA polymerase beta chain family. As to quaternary structure, the RNAP catalytic core consists of 2 alpha, 1 beta, 1 beta' and 1 omega subunit. When a sigma factor is associated with the core the holoenzyme is formed, which can initiate transcription.

It catalyses the reaction RNA(n) + a ribonucleoside 5'-triphosphate = RNA(n+1) + diphosphate. Functionally, DNA-dependent RNA polymerase catalyzes the transcription of DNA into RNA using the four ribonucleoside triphosphates as substrates. This is DNA-directed RNA polymerase subunit beta from Brucella melitensis biotype 2 (strain ATCC 23457).